A 271-amino-acid polypeptide reads, in one-letter code: Rhomboid-type serine protease 2 (271 aa).

A run of 6 helical transmembrane segments spans residues 16 to 36 (GLAV…NLVY), 64 to 84 (HLSF…IVMF), 89 to 111 (GTLY…YCLI), 115 to 137 (LFPN…YFAV), 152 to 172 (FSFP…LLAP), and 176 to 196 (LPGH…ENWV). Ser-125 serves as the catalytic Nucleophile. The active site involves His-179. The disordered stretch occupies residues 252 to 271 (HNTDTPAEPTFQGNGRVLGN).

It belongs to the peptidase S54 family.

Its subcellular location is the golgi apparatus membrane. It localises to the golgi apparatus. The protein localises to the cis-Golgi network membrane. It carries out the reaction Cleaves type-1 transmembrane domains using a catalytic dyad composed of serine and histidine that are contributed by different transmembrane domains.. Its function is as follows. Probable rhomboid-type serine protease that catalyzes intramembrane proteolysis. In Kluyveromyces lactis (strain ATCC 8585 / CBS 2359 / DSM 70799 / NBRC 1267 / NRRL Y-1140 / WM37) (Yeast), this protein is Rhomboid-type serine protease 2 (RBD2).